We begin with the raw amino-acid sequence, 507 residues long: ATP synthase subunit alpha, chloroplastic (507 aa).

170–177 (GDRQTGKT) is a binding site for ATP.

It belongs to the ATPase alpha/beta chains family. F-type ATPases have 2 components, CF(1) - the catalytic core - and CF(0) - the membrane proton channel. CF(1) has five subunits: alpha(3), beta(3), gamma(1), delta(1), epsilon(1). CF(0) has four main subunits: a, b, b' and c.

It localises to the plastid. The protein resides in the chloroplast thylakoid membrane. It carries out the reaction ATP + H2O + 4 H(+)(in) = ADP + phosphate + 5 H(+)(out). Produces ATP from ADP in the presence of a proton gradient across the membrane. The alpha chain is a regulatory subunit. The sequence is that of ATP synthase subunit alpha, chloroplastic from Panax ginseng (Korean ginseng).